Here is a 99-residue protein sequence, read N- to C-terminus: MPEISRDQVAHLAKLARLALSEEELQQFAGQIDDIVGHVSAVQNVDAEGVEPMSHPHSIMTTMRDDVVVKTLTPEQALDQAPAVEDGRFMVPQILGEGD.

It belongs to the GatC family. Heterotrimer of A, B and C subunits.

It catalyses the reaction L-glutamyl-tRNA(Gln) + L-glutamine + ATP + H2O = L-glutaminyl-tRNA(Gln) + L-glutamate + ADP + phosphate + H(+). The catalysed reaction is L-aspartyl-tRNA(Asn) + L-glutamine + ATP + H2O = L-asparaginyl-tRNA(Asn) + L-glutamate + ADP + phosphate + 2 H(+). Its function is as follows. Allows the formation of correctly charged Asn-tRNA(Asn) or Gln-tRNA(Gln) through the transamidation of misacylated Asp-tRNA(Asn) or Glu-tRNA(Gln) in organisms which lack either or both of asparaginyl-tRNA or glutaminyl-tRNA synthetases. The reaction takes place in the presence of glutamine and ATP through an activated phospho-Asp-tRNA(Asn) or phospho-Glu-tRNA(Gln). This chain is Aspartyl/glutamyl-tRNA(Asn/Gln) amidotransferase subunit C, found in Corynebacterium efficiens (strain DSM 44549 / YS-314 / AJ 12310 / JCM 11189 / NBRC 100395).